The following is a 355-amino-acid chain: Holliday junction branch migration complex subunit RuvB (355 aa).

The segment at 4–190 is large ATPase domain (RuvB-L); that stretch reads TDKLAAERII…FGIVARLEFY (187 aa). Residues Leu-29, Arg-30, Gly-71, Lys-74, Thr-75, Thr-76, 137 to 139, Arg-180, Tyr-190, and Arg-227 contribute to the ATP site; that span reads EDY. Thr-75 is a Mg(2+) binding site. Residues 191 to 261 are small ATPAse domain (RuvB-S); sequence DAEQLSRIVR…VADAALAMLD (71 aa). A head domain (RuvB-H) region spans residues 264 to 355; that stretch reads PVGFDLMDRK…GSMWNTPDGA (92 aa). Residues Arg-300, Arg-319, and Arg-324 each contribute to the DNA site.

The protein belongs to the RuvB family. As to quaternary structure, homohexamer. Forms an RuvA(8)-RuvB(12)-Holliday junction (HJ) complex. HJ DNA is sandwiched between 2 RuvA tetramers; dsDNA enters through RuvA and exits via RuvB. An RuvB hexamer assembles on each DNA strand where it exits the tetramer. Each RuvB hexamer is contacted by two RuvA subunits (via domain III) on 2 adjacent RuvB subunits; this complex drives branch migration. In the full resolvosome a probable DNA-RuvA(4)-RuvB(12)-RuvC(2) complex forms which resolves the HJ.

It localises to the cytoplasm. It catalyses the reaction ATP + H2O = ADP + phosphate + H(+). In terms of biological role, the RuvA-RuvB-RuvC complex processes Holliday junction (HJ) DNA during genetic recombination and DNA repair, while the RuvA-RuvB complex plays an important role in the rescue of blocked DNA replication forks via replication fork reversal (RFR). RuvA specifically binds to HJ cruciform DNA, conferring on it an open structure. The RuvB hexamer acts as an ATP-dependent pump, pulling dsDNA into and through the RuvAB complex. RuvB forms 2 homohexamers on either side of HJ DNA bound by 1 or 2 RuvA tetramers; 4 subunits per hexamer contact DNA at a time. Coordinated motions by a converter formed by DNA-disengaged RuvB subunits stimulates ATP hydrolysis and nucleotide exchange. Immobilization of the converter enables RuvB to convert the ATP-contained energy into a lever motion, pulling 2 nucleotides of DNA out of the RuvA tetramer per ATP hydrolyzed, thus driving DNA branch migration. The RuvB motors rotate together with the DNA substrate, which together with the progressing nucleotide cycle form the mechanistic basis for DNA recombination by continuous HJ branch migration. Branch migration allows RuvC to scan DNA until it finds its consensus sequence, where it cleaves and resolves cruciform DNA. This chain is Holliday junction branch migration complex subunit RuvB, found in Burkholderia vietnamiensis (strain G4 / LMG 22486) (Burkholderia cepacia (strain R1808)).